The primary structure comprises 403 residues: Acetate kinase (403 aa).

N7 contributes to the Mg(2+) binding site. K14 lines the ATP pocket. R97 contributes to the substrate binding site. The active-site Proton donor/acceptor is D154. ATP contacts are provided by residues 213-217 (HLGNG), 287-289 (DMR), and 335-339 (GIGEN). Residue E388 participates in Mg(2+) binding.

The protein belongs to the acetokinase family. As to quaternary structure, homodimer. Mg(2+) is required as a cofactor. It depends on Mn(2+) as a cofactor.

The protein resides in the cytoplasm. It catalyses the reaction acetate + ATP = acetyl phosphate + ADP. The protein operates within metabolic intermediate biosynthesis; acetyl-CoA biosynthesis; acetyl-CoA from acetate: step 1/2. Catalyzes the formation of acetyl phosphate from acetate and ATP. Can also catalyze the reverse reaction. In Synechococcus sp. (strain JA-2-3B'a(2-13)) (Cyanobacteria bacterium Yellowstone B-Prime), this protein is Acetate kinase.